Reading from the N-terminus, the 465-residue chain is MAKQAPDVGDYKYGFHDEDVSIFRSERGLTENIVTEISKMKEEPQWMLDFRLKALKLFYKMPMPQWGGDLSELDFDDITYYVKPSEHTERSWDEVPEEIKRTFDKLGIPEAEQKYLAGVSAQYESEVVYHNMEKELEEKGIIFKDTDSALRENEELFREYFASVVPAADNKFAALNSAVWSGGSFIYVPKNVKLDTPLQAYFRINSENMGQFERTLIIADEGASVNYVEGCTAPVYSTSSLHSAVVEIIVHKDAHVRYTTIQNWANNVYNLVTKRTFVHENGNMEWVDGNLGSKLTMKYPNCVLLGEGAKGSTLSIAFASKGQVQDAGAKMIHKAPNTSSTIVSKSISKNGGKVIYRGIVHFGRKAKGARSNIECDTLILDNESTSDTIPYNEVFNDNISLEHEAKVSKVSEEQLFYLMSRGISEEEATEMIVMGFIEPFTKELPMEYAVEMNRLIKFEMEGSIG.

Belongs to the iron-sulfur cluster assembly SufBD family.

The protein is Iron-sulfur cluster assembly SufBD family protein SE_0610 of Staphylococcus epidermidis (strain ATCC 12228 / FDA PCI 1200).